The sequence spans 268 residues: Ubiquinone biosynthesis protein COQ4 homolog, mitochondrial (268 aa).

Zn(2+) contacts are provided by His-171, Asp-172, His-175, and Glu-187.

This sequence belongs to the COQ4 family. As to quaternary structure, component of a multi-subunit COQ enzyme complex. Zn(2+) is required as a cofactor.

It is found in the mitochondrion inner membrane. It carries out the reaction a 4-hydroxy-3-methoxy-5-(all-trans-polyprenyl)benzoate + H(+) = a 2-methoxy-6-(all-trans-polyprenyl)phenol + CO2. It participates in cofactor biosynthesis; ubiquinone biosynthesis. Lyase that catalyzes the C1-decarboxylation of 4-hydroxy-3-methoxy-5-(all-trans-polyprenyl)benzoic acid into 2-methoxy-6-(all-trans-polyprenyl)phenol during ubiquinone biosynthesis. This Drosophila erecta (Fruit fly) protein is Ubiquinone biosynthesis protein COQ4 homolog, mitochondrial.